Reading from the N-terminus, the 586-residue chain is MRQAAPPAARMRMDAKVISKAKLPSRHVTVGPARAPHRSYLYAMGLSAAEIAQPLVGVASCWNEAAPCNISLMRQAQVVKKGVAAANGTPREFCTITVTDGIAMGHQGMKSSLVSREVIADSVELTMRGHCYDALVGLAGCDKSLPGMMMAMVRLNVPSIFIYGGSILPGSYRGRQITVQDVFEAVGQHSVGTIGDAELLEIEQAACPSAGSCGAQFTANTMATVAEAIGLALPYSCGAPAPYEMRDRFNFASGEKIMELIAKNIRPRDIITLKALENAATVVSATGGSTNAALHLPAIAHEAGIKFDLFDVARIFEKTPYIADLKPGGKYVAKDMFEAGGIPLLMKTLLDHGYLHGDCLTVTGRTLAENMEHVAWNEHQDVVRPANRPITQTGGVVGLKGNLAPEGAIVKVAGMTELKFSGPARCFDSEEECFEAVTQRNYREGEVLVIRYEGPRGGPGMREMLSTTAALYGQGMGGKVALITDGRFSGATRGFCIGHVGPEAAVGGPIGLIRDGDVISIDAVNGTIEVALSDSELAARAKTWKARTTDYQSGAIWKYAQTVGSARDGAVTHPGGAKETHCYADI.

C68 contributes to the [2Fe-2S] cluster binding site. Position 100 (D100) interacts with Mg(2+). C141 serves as a coordination point for [2Fe-2S] cluster. Positions 142 and 143 each coordinate Mg(2+). K143 bears the N6-carboxylysine mark. C213 lines the [2Fe-2S] cluster pocket. E463 contributes to the Mg(2+) binding site. The active-site Proton acceptor is S489.

The protein belongs to the IlvD/Edd family. As to quaternary structure, homodimer. The cofactor is [2Fe-2S] cluster. Mg(2+) is required as a cofactor.

It catalyses the reaction (2R)-2,3-dihydroxy-3-methylbutanoate = 3-methyl-2-oxobutanoate + H2O. It carries out the reaction (2R,3R)-2,3-dihydroxy-3-methylpentanoate = (S)-3-methyl-2-oxopentanoate + H2O. It functions in the pathway amino-acid biosynthesis; L-isoleucine biosynthesis; L-isoleucine from 2-oxobutanoate: step 3/4. It participates in amino-acid biosynthesis; L-valine biosynthesis; L-valine from pyruvate: step 3/4. Functionally, functions in the biosynthesis of branched-chain amino acids. Catalyzes the dehydration of (2R,3R)-2,3-dihydroxy-3-methylpentanoate (2,3-dihydroxy-3-methylvalerate) into 2-oxo-3-methylpentanoate (2-oxo-3-methylvalerate) and of (2R)-2,3-dihydroxy-3-methylbutanoate (2,3-dihydroxyisovalerate) into 2-oxo-3-methylbutanoate (2-oxoisovalerate), the penultimate precursor to L-isoleucine and L-valine, respectively. This Mesorhizobium japonicum (strain LMG 29417 / CECT 9101 / MAFF 303099) (Mesorhizobium loti (strain MAFF 303099)) protein is Dihydroxy-acid dehydratase 2.